The primary structure comprises 148 residues: SsrA-binding protein (148 aa).

It belongs to the SmpB family.

It localises to the cytoplasm. Its function is as follows. Required for rescue of stalled ribosomes mediated by trans-translation. Binds to transfer-messenger RNA (tmRNA), required for stable association of tmRNA with ribosomes. tmRNA and SmpB together mimic tRNA shape, replacing the anticodon stem-loop with SmpB. tmRNA is encoded by the ssrA gene; the 2 termini fold to resemble tRNA(Ala) and it encodes a 'tag peptide', a short internal open reading frame. During trans-translation Ala-aminoacylated tmRNA acts like a tRNA, entering the A-site of stalled ribosomes, displacing the stalled mRNA. The ribosome then switches to translate the ORF on the tmRNA; the nascent peptide is terminated with the 'tag peptide' encoded by the tmRNA and targeted for degradation. The ribosome is freed to recommence translation, which seems to be the essential function of trans-translation. This Mycoplasma mycoides subsp. mycoides SC (strain CCUG 32753 / NCTC 10114 / PG1) protein is SsrA-binding protein.